The chain runs to 248 residues: Cell division protein ZapD (248 aa).

The protein belongs to the ZapD family. As to quaternary structure, interacts with FtsZ.

It is found in the cytoplasm. Cell division factor that enhances FtsZ-ring assembly. Directly interacts with FtsZ and promotes bundling of FtsZ protofilaments, with a reduction in FtsZ GTPase activity. In Aliivibrio salmonicida (strain LFI1238) (Vibrio salmonicida (strain LFI1238)), this protein is Cell division protein ZapD.